The following is a 1272-amino-acid chain: MNNILSNSIKSLRYWDDQTVKAIFDKYQINVSGIYNISDDILESDLKLHIAQLLFLIVKHKEEFSVYLGETHLEKILKKLVKQFKYLEIRFLGKFKGKKQFFIDISDLHVDNILEKTEEIIKLIKKQYEYIKKQKKRRLDGVYVGIAPRKEKRGDAGAATAWSYIAFDFDVEEWKTNKMPTEEEIMEKLIKYLSKFVEKDILPHKVAFTGGGLRFILYPERPILEEELILLRMIAEDLGADIAMYDLARVDRLVGTYNYKEKYGSPRPCVTIAQLTDEEDIEKLLTPIILYEKFGIIENYKEFEVLFNEKREELYNKRGLNNITTTINRLIKKPNLNKTILQDINKRIYKWLYTIQDKLTKKLGKRWIEKLLSYLGIDYKYGKNGTRLDLWSLFFDDGKNPDCSIYINEGYNAVMVDFHDPNMRFIALAGLWMIKEFRDKIIEFLKLHNINPKPSTYRTVREIMNELLDRETIKIEAEGYLPKEAIIKAYQLSIEQGVPVFLKADTGRGKTYTLTRNTREIKEVFKKHAIAVAFPYKIQVLQVGAGLHADGVVVPMYYEDGKKLDKNTIHYLTIGTYDQVENMLNDLCYDTYKGEKIQVANEEDILLAIDEAHDLVIQKEFRKRAITGVKKCIDRAGGCVLLTATPELINLNNYPVIEVEFKDEKKLFERCSIHIAKNIIGEFCEYILLMFRQGWIKNAVVLVDNKKMIENIKYTLELYGFNKPIYVITRETVGIDKASKMIINEEKVPEEGLILATRVISEGVNIKNHVDLVWALYCKSATTIRQFIARCRNGGGELIVTAPFKEREEEPMIIDYNAMIEMFKENYKLLKEYLETDIEVLKELDKNYKKVLISQIQNAIYYDEEKKDWVLDEDEIAHIYNSLLEAHITRDYKLLKEYLEKTTGYEFAIKTIKELKESKLDKFLKYNYLEYLEKVSAKHIIIAFKEYGVNEIKNALEYNNYKKFKDCRDEYTPQLIKKHSKRINRSINVLKDVYNIPEVIEVYNLMLNKGKDDDKKSNLDENTIKKCLEEINEYKKIVKEINENEDRKTKKIYHIDLKLLEEHKDKLSTLARIIEELILKTFLCPPSKWGKIQRIIRAVWNIVVGEDDERLDRRKLGLRSLVAKVLIKVRDFAIERQKFKIRELIEVIKEECGFTLTLDEVRRLIRAIFNCVIRGVKKLGENAVVEIKELNKEFKTLYEIIKQNINSNSVEKCEKVIEKKIEENGGEILEMELYELIVEKLKFVEEVFYKALEKLKKLGVIYEPKPGLLRIT.

This is an uncharacterized protein from Methanocaldococcus jannaschii (strain ATCC 43067 / DSM 2661 / JAL-1 / JCM 10045 / NBRC 100440) (Methanococcus jannaschii).